We begin with the raw amino-acid sequence, 202 residues long: Endothelin-1 (202 aa).

The signal sequence occupies residues 1-25 (MDYFPVIFSLLFVTFQGAPETAVLG). The propeptide occupies 26–50 (AELSTGAENGVQSPPPSTPWRPRRS). 2 disulfides stabilise this stretch: Cys53–Cys67 and Cys55–Cys63. The propeptide occupies 74–202 (VNTPERVVPY…DQKLTHNRAH (129 aa)). The tract at residues 110 to 124 (CQCAHQKDKKCWNFC) is endothelin-like.

This sequence belongs to the endothelin/sarafotoxin family. As to expression, highest expression in the adult is in lung. Lower levels found in heart, kidney, brain and intestine. In the embryo, expressed in outer and inner pharyngeal arch surfaces. Also expressed in endothelium of dorsal aorta and arch arteries, and in epithelium of pharyngeal pouches.

It is found in the secreted. In terms of biological role, endothelins are endothelium-derived vasoconstrictor peptides. Probable ligand for G-protein coupled receptors EDNRA and EDNRB which activates PTK2B, BCAR1, BCAR3 and, GTPases RAP1 and RHOA cascade in glomerular mesangial cells. Also binds the DEAR/FBXW7-AS1 receptor. Promotes mesenteric arterial wall remodeling via activation of ROCK signaling and subsequent colocalization of NFATC3 with F-actin filaments. NFATC3 then translocates to the nucleus where it subsequently promotes the transcription of the smooth muscle hypertrophy and differentiation marker ACTA2. This chain is Endothelin-1 (Edn1), found in Mus musculus (Mouse).